The primary structure comprises 301 residues: MVFTQAPAEIMGHLRIRSLLARQCLAEFLGVFVLMLLTQGAVAQAVTSGETKGNFFTMFLAGSLAVTIAIYVGGNVSGAHLNPAFSLAMCIVGRLPWVKLPIYILVQLLSAFCASGATYVLYHDALQNYTGGNLTVTGPKETASIFATYPAPYLSLNNGFLDQVLGTGMLIVGLLAILDRRNKGVPAGLEPVVVGMLILALGLSMGANCGIPLNPARDLGPRLFTYVAGWGPEVFSAGNGWWWVPVVAPLVGATVGTATYQLLVALHHPEGPEPAQDLVSAQHKASELETPASAQMLECKL.

At 1-22 (MVFTQAPAEIMGHLRIRSLLAR) the chain is on the cytoplasmic side. A helical transmembrane segment spans residues 23 to 41 (QCLAEFLGVFVLMLLTQGA). The Extracellular segment spans residues 42–55 (VAQAVTSGETKGNF). The chain crosses the membrane as a helical span at residues 56–75 (FTMFLAGSLAVTIAIYVGGN). Over 76–77 (VS) the chain is Cytoplasmic. Positions 78-90 (GAHLNPAFSLAMC) form an intramembrane region, discontinuously helical. The short motif at 82-84 (NPA) is the NPA 1 element. Topologically, residues 91-96 (IVGRLP) are cytoplasmic. The helical transmembrane segment at 97 to 121 (WVKLPIYILVQLLSAFCASGATYVL) threads the bilayer. Over 122–158 (YHDALQNYTGGNLTVTGPKETASIFATYPAPYLSLNN) the chain is Extracellular. Residues asparagine 128 and asparagine 133 are each glycosylated (N-linked (GlcNAc...) asparagine). The chain crosses the membrane as a helical span at residues 159–176 (GFLDQVLGTGMLIVGLLA). Topologically, residues 177–188 (ILDRRNKGVPAG) are cytoplasmic. The helical transmembrane segment at 189–205 (LEPVVVGMLILALGLSM) threads the bilayer. At 206–208 (GAN) the chain is on the extracellular side. An intramembrane region (discontinuously helical) is located at residues 209 to 223 (CGIPLNPARDLGPRL). The short motif at 214 to 216 (NPA) is the NPA 2 element. Topologically, residues 224–241 (FTYVAGWGPEVFSAGNGW) are extracellular. The helical transmembrane segment at 242–262 (WWVPVVAPLVGATVGTATYQL) threads the bilayer. Residues 263 to 301 (LVALHHPEGPEPAQDLVSAQHKASELETPASAQMLECKL) are Cytoplasmic-facing.

It belongs to the MIP/aquaporin (TC 1.A.8) family. As to quaternary structure, homotetramer; each monomer provides an independent glycerol/water pore. In terms of processing, N-glycosylation at Asn-133 increases the stability of the protein but has no effect on its activity. Detected in epithelial cells on villi in the ileum, and also in stomach, jejunum, colon, rectum, white adipose tissue and placenta (at protein level). Expressed in duodenum and jejunum. Highest expression in absorptive epithelial cells at the tips of villi in the jejunum. Detected in subcutaneous adipose tissue.

Its subcellular location is the apical cell membrane. It is found in the cell membrane. The protein resides in the lipid droplet. The enzyme catalyses glycerol(in) = glycerol(out). The catalysed reaction is H2O(in) = H2O(out). It catalyses the reaction urea(in) = urea(out). With respect to regulation, glycerol transport is regulated by pH, with the porin being permeable to glycerol at pH 5.5 but not at pH 7.4. Water permeability, however, is not influenced by pH. Its function is as follows. Aquaglyceroporins form homotetrameric transmembrane channels, with each monomer independently mediating glycerol and water transport across the plasma membrane along their osmotic gradient. Could also be permeable to urea. Among aquaglyceroporins, it exhibits a unique pH-gated glycerol transport activity, being more active at acidic pH. It most likely plays a central role in the efflux of glycerol formed during triglyceride hydrolysis in adipocytes and in glycerol uptake by enterocytes, as both processes occur and are stimulated at acidic pH. The polypeptide is Aquaporin-10 (Homo sapiens (Human)).